The primary structure comprises 301 residues: MKLAILSRNSKLYSTRRLVEVARMRGHTVRILDPLRCYMRIVVGDFSMHYKGKPIDGYHAVIPRIGVSVTHYATAVLRQFELMGTYSPNPSDAILRSRDKLRAHQLLAAQGIDMPMTVFGDNPDDTQDLLSMLGPPPHVVKLNEGAQGKGVILSEKNSASRGLVEALRGLYANFLVQEFISEADSADLRCFVVGNQVVATMRRQAADGDFRSNLHLGGSATAATASEEEQEVAVRSAHALGLTVAGVDLIRSRRGPLVLEVNPTPGLEGIEATSGTNVAIKIVHHVEEMLATICSSNICQP.

Residues histidine 104–glutamate 287 form the ATP-grasp domain. Residues lysine 141, glutamate 178–phenylalanine 179, aspartate 187, and arginine 211–asparagine 213 each bind ATP. Residues aspartate 248, glutamate 260, and asparagine 262 each coordinate Mg(2+). Mn(2+)-binding residues include aspartate 248, glutamate 260, and asparagine 262.

Belongs to the RimK family. The cofactor is Mg(2+). It depends on Mn(2+) as a cofactor.

In Xylella fastidiosa (strain M12), this protein is Probable alpha-L-glutamate ligase.